An 840-amino-acid polypeptide reads, in one-letter code: Phosphatidylglycerol lysyltransferase (840 aa).

Over 1-8 (MNQEVKNK) the chain is Cytoplasmic. A helical membrane pass occupies residues 9–29 (IFSILKITFATALFIFVVITL). The Extracellular portion of the chain corresponds to 30–52 (YRELSGINFKDTLVEFSKINRMS). The chain crosses the membrane as a helical span at residues 53–73 (LVLLFIGGGASLVILSMYDVI). Topologically, residues 74 to 89 (LSRALKMDISLGKVLR) are cytoplasmic. Residues 90–110 (VSYIINALNAIVGFGGFIGAG) traverse the membrane as a helical segment. Residues 111-128 (VRAMVYKNYTHDKKKLVH) lie on the Extracellular side of the membrane. Residues 129-149 (FISLILISMLTGLSLLSLLIV) form a helical membrane-spanning segment. Over 150–161 (FHVFDASLILDK) the chain is Cytoplasmic. Residues 162-182 (ITWVRWVLYVVSFFLPLFIIY) traverse the membrane as a helical segment. The Extracellular segment spans residues 183–200 (SMVRPPDKNNRFVGLYCT). A helical transmembrane segment spans residues 201-221 (LVSCVEWLAAAVVLYFCGVIV). Residues 222–229 (DAHVSFMS) are Cytoplasmic-facing. A helical membrane pass occupies residues 230-250 (FIAIFIIAALSGLVSFIPGGF). Residues 251-271 (GAFDLVVLLGFKTLGVPEEKV) are Extracellular-facing. Residues 272-292 (LLMLLLYRFAYYFVPVIIALI) traverse the membrane as a helical segment. The Cytoplasmic segment spans residues 293-337 (LSSFEFGTSAKKYIEGSKYFIPAKDVTSFLMSYQKDIIAKIPSLS). The helical transmembrane segment at 338–358 (LAILVFFTSMIFFVNNLTIVY) threads the bilayer. Topologically, residues 359-369 (DALYDGNHLTY) are extracellular. Residues 370–390 (YILLAIHTSACLLLLLNVVGI) traverse the membrane as a helical segment. The Cytoplasmic segment spans residues 391–394 (YKQS). Transmembrane regions (helical) follow at residues 395-415 (RRAI…TFFT) and 416-436 (YASY…IVAF). At 437–450 (RRARRLKRPVRMRN) the chain is on the cytoplasmic side. The chain crosses the membrane as a helical span at residues 451–471 (IVAMLLFSLFILYVNHIFIAG). Residues 472–489 (TLYALDIYTIEMHTSVLR) lie on the Extracellular side of the membrane. Residues 490-510 (YYFWLTILIIAIIIGMIAWLF) form a helical membrane-spanning segment. Residues 511-840 (DYQFSKVRIS…SKVMRVIRHK (330 aa)) lie on the Cytoplasmic side of the membrane.

This sequence belongs to the LPG synthase family.

The protein resides in the cell membrane. The catalysed reaction is L-lysyl-tRNA(Lys) + a 1,2-diacyl-sn-glycero-3-phospho-(1'-sn-glycerol) = a 1,2-diacyl-sn-glycero-3-phospho-1'-(3'-O-L-lysyl)-sn-glycerol + tRNA(Lys). Its function is as follows. Catalyzes the transfer of a lysyl group from L-lysyl-tRNA(Lys) to membrane-bound phosphatidylglycerol (PG), which produces lysylphosphatidylglycerol (LPG), a major component of the bacterial membrane with a positive net charge. LPG synthesis contributes to bacterial virulence as it is involved in the resistance mechanism against cationic antimicrobial peptides (CAMP) produces by the host's immune system (defensins, cathelicidins) and by the competing microorganisms (bacteriocins). In fact, the modification of anionic phosphatidylglycerol with positively charged L-lysine results in repulsion of the peptides. This chain is Phosphatidylglycerol lysyltransferase (mprF), found in Staphylococcus aureus (strain MSSA476).